The chain runs to 117 residues: Ribosome-binding factor A (117 aa).

This sequence belongs to the RbfA family. Monomer. Binds 30S ribosomal subunits, but not 50S ribosomal subunits or 70S ribosomes.

The protein resides in the cytoplasm. One of several proteins that assist in the late maturation steps of the functional core of the 30S ribosomal subunit. Associates with free 30S ribosomal subunits (but not with 30S subunits that are part of 70S ribosomes or polysomes). Required for efficient processing of 16S rRNA. May interact with the 5'-terminal helix region of 16S rRNA. This chain is Ribosome-binding factor A, found in Streptococcus thermophilus (strain CNRZ 1066).